A 122-amino-acid polypeptide reads, in one-letter code: Large ribosomal subunit protein uL18 (122 aa).

The span at 1 to 21 (MSKLSRKQQTQKRHRRLRRHL) shows a compositional bias: basic residues. Positions 1–26 (MSKLSRKQQTQKRHRRLRRHLTGTSD) are disordered.

Belongs to the universal ribosomal protein uL18 family. Part of the 50S ribosomal subunit; part of the 5S rRNA/L5/L18/L25 subcomplex. Contacts the 5S and 23S rRNAs.

This is one of the proteins that bind and probably mediate the attachment of the 5S RNA into the large ribosomal subunit, where it forms part of the central protuberance. The sequence is that of Large ribosomal subunit protein uL18 from Parasynechococcus marenigrum (strain WH8102).